Reading from the N-terminus, the 305-residue chain is ATP synthase gamma chain (305 aa).

It belongs to the ATPase gamma chain family. In terms of assembly, F-type ATPases have 2 components, CF(1) - the catalytic core - and CF(0) - the membrane proton channel. CF(1) has five subunits: alpha(3), beta(3), gamma(1), delta(1), epsilon(1). CF(0) has three main subunits: a, b and c.

The protein resides in the cell membrane. Produces ATP from ADP in the presence of a proton gradient across the membrane. The gamma chain is believed to be important in regulating ATPase activity and the flow of protons through the CF(0) complex. In Streptomyces coelicolor (strain ATCC BAA-471 / A3(2) / M145), this protein is ATP synthase gamma chain.